The primary structure comprises 701 residues: Polyribonucleotide nucleotidyltransferase (701 aa).

Mg(2+) is bound by residues Asp-490 and Asp-496. Residues 557-616 (PKVVTMSINPDKIRDVIGPGGKKINEIIDETGVKLDIEQDGTIFIGAVDQAMINRAKEII) form the KH domain. An S1 motif domain is found at 626–694 (GQVYHAKVKR…KQGRVNASHK (69 aa)).

This sequence belongs to the polyribonucleotide nucleotidyltransferase family. Mg(2+) serves as cofactor.

Its subcellular location is the cytoplasm. It catalyses the reaction RNA(n+1) + phosphate = RNA(n) + a ribonucleoside 5'-diphosphate. Its function is as follows. Involved in mRNA degradation. Catalyzes the phosphorolysis of single-stranded polyribonucleotides processively in the 3'- to 5'-direction. This Staphylococcus epidermidis (strain ATCC 12228 / FDA PCI 1200) protein is Polyribonucleotide nucleotidyltransferase.